A 276-amino-acid polypeptide reads, in one-letter code: Secretagogin (276 aa).

6 consecutive EF-hand domains span residues 12–47, 58–93, 105–140, 149–184, 197–232, and 240–276; these read LDAA…LLAK, NVQK…EDEN, DNSV…LFLH, ELEE…QENF, ERKR…MMEL, and VDLD…KINP. Ca(2+) is bound by residues D25, Y31, E36, S73, E75, R77, E82, D118, D120, S122, E129, D162, N164, D166, R168, D173, D210, S212, T214, E221, D254, N256, D258, K260, and E265.

The protein resides in the cytoplasm. It is found in the secreted. It localises to the cytoplasmic vesicle. The protein localises to the secretory vesicle membrane. This chain is Secretagogin (Scgn), found in Mus musculus (Mouse).